A 183-amino-acid chain; its full sequence is Inner membrane-spanning protein YciB (183 aa).

Transmembrane regions (helical) follow at residues 4–24 (FIEFIPLIVFFAVYKFYDIYM), 50–70 (MQLFTFLLVGFFGGLTVFFHD), 72–92 (TFIKWKVTVINVLFALGLLIS), 119–139 (VNLGWAGFFTVCGLLNLYVAF), and 149–169 (FKVFGLLGMTLVFTLLSGVYL).

Belongs to the YciB family.

Its subcellular location is the cell inner membrane. Functionally, plays a role in cell envelope biogenesis, maintenance of cell envelope integrity and membrane homeostasis. The protein is Inner membrane-spanning protein YciB of Aeromonas hydrophila subsp. hydrophila (strain ATCC 7966 / DSM 30187 / BCRC 13018 / CCUG 14551 / JCM 1027 / KCTC 2358 / NCIMB 9240 / NCTC 8049).